We begin with the raw amino-acid sequence, 481 residues long: Aspartyl/glutamyl-tRNA(Asn/Gln) amidotransferase subunit B (481 aa).

This sequence belongs to the GatB/GatE family. GatB subfamily. Heterotrimer of A, B and C subunits.

It carries out the reaction L-glutamyl-tRNA(Gln) + L-glutamine + ATP + H2O = L-glutaminyl-tRNA(Gln) + L-glutamate + ADP + phosphate + H(+). It catalyses the reaction L-aspartyl-tRNA(Asn) + L-glutamine + ATP + H2O = L-asparaginyl-tRNA(Asn) + L-glutamate + ADP + phosphate + 2 H(+). Allows the formation of correctly charged Asn-tRNA(Asn) or Gln-tRNA(Gln) through the transamidation of misacylated Asp-tRNA(Asn) or Glu-tRNA(Gln) in organisms which lack either or both of asparaginyl-tRNA or glutaminyl-tRNA synthetases. The reaction takes place in the presence of glutamine and ATP through an activated phospho-Asp-tRNA(Asn) or phospho-Glu-tRNA(Gln). This chain is Aspartyl/glutamyl-tRNA(Asn/Gln) amidotransferase subunit B, found in Pseudomonas entomophila (strain L48).